The primary structure comprises 115 residues: Large ribosomal subunit protein bL19 (115 aa).

It belongs to the bacterial ribosomal protein bL19 family.

Its function is as follows. This protein is located at the 30S-50S ribosomal subunit interface and may play a role in the structure and function of the aminoacyl-tRNA binding site. The chain is Large ribosomal subunit protein bL19 from Aeromonas hydrophila subsp. hydrophila (strain ATCC 7966 / DSM 30187 / BCRC 13018 / CCUG 14551 / JCM 1027 / KCTC 2358 / NCIMB 9240 / NCTC 8049).